A 303-amino-acid polypeptide reads, in one-letter code: Cathepsin B-like CP1 (303 aa).

An N-terminal signal peptide occupies residues 1–19 (MALSLLLAVVCAKPLVSRA). Asn41 carries N-linked (GlcNAc...) asparagine glycosylation. Intrachain disulfides connect Cys92/Cys119, Cys102/Cys145, and Cys138/Cys181. The active site involves Cys105. Residues His249 and Asn270 contribute to the active site.

Belongs to the peptidase C1 family.

The protein resides in the vacuole. Functionally, thiol protease which is required for parasite excystation and invasion of the proximal small intestine of the human host. This Giardia intestinalis (Giardia lamblia) protein is Cathepsin B-like CP1 (CP1).